We begin with the raw amino-acid sequence, 161 residues long: Tropomyosin-2 (161 aa).

Residues 1–161 (MEKIKEKLNS…DEIANSLENL (161 aa)) are a coiled coil. Residues 32–43 (LEQSNTEKENEI) show a composition bias toward basic and acidic residues. The tract at residues 32-97 (LEQSNTEKEN…NQDLEQQLED (66 aa)) is disordered. The residue at position 55 (serine 55) is a Phosphoserine. Polar residues predominate over residues 62–83 (SQLSDTKQLAEDSNNLRSNNEN). Phosphoserine is present on residues serine 116 and serine 157.

In terms of assembly, homodimer.

The protein resides in the cytoplasm. Its subcellular location is the cytoskeleton. Involved in cell morphogenesis. Binds to F-actin and stabilizes the actin filaments. This is Tropomyosin-2 (TPM2) from Saccharomyces cerevisiae (strain ATCC 204508 / S288c) (Baker's yeast).